The following is a 203-amino-acid chain: Histidine biosynthesis bifunctional protein HisIE (203 aa).

Residues 1–114 form a phosphoribosyl-AMP cyclohydrolase region; sequence MLTEQQRREL…FGNTAHQWLF (114 aa). Residues 115–203 form a phosphoribosyl-ATP pyrophosphohydrolase region; the sequence is LYQLEQLLAE…VIENLHKRHQ (89 aa).

It in the N-terminal section; belongs to the PRA-CH family. In the C-terminal section; belongs to the PRA-PH family.

The protein localises to the cytoplasm. It carries out the reaction 1-(5-phospho-beta-D-ribosyl)-ATP + H2O = 1-(5-phospho-beta-D-ribosyl)-5'-AMP + diphosphate + H(+). It catalyses the reaction 1-(5-phospho-beta-D-ribosyl)-5'-AMP + H2O = 1-(5-phospho-beta-D-ribosyl)-5-[(5-phospho-beta-D-ribosylamino)methylideneamino]imidazole-4-carboxamide. The protein operates within amino-acid biosynthesis; L-histidine biosynthesis; L-histidine from 5-phospho-alpha-D-ribose 1-diphosphate: step 2/9. It functions in the pathway amino-acid biosynthesis; L-histidine biosynthesis; L-histidine from 5-phospho-alpha-D-ribose 1-diphosphate: step 3/9. The polypeptide is Histidine biosynthesis bifunctional protein HisIE (hisI) (Shigella flexneri).